Consider the following 241-residue polypeptide: Methylthioribulose-1-phosphate dehydratase (241 aa).

The segment covering 1 to 17 (MAKQVENNNNDHLVQST) has biased composition (polar residues). Residues 1 to 21 (MAKQVENNNNDHLVQSTDPEH) are disordered. Residue Cys-100 coordinates substrate. Residues His-117 and His-119 each coordinate Zn(2+). The active-site Proton donor/acceptor is the Glu-146. His-202 is a binding site for Zn(2+).

It belongs to the aldolase class II family. MtnB subfamily. The cofactor is Zn(2+).

The protein resides in the cytoplasm. The enzyme catalyses 5-(methylsulfanyl)-D-ribulose 1-phosphate = 5-methylsulfanyl-2,3-dioxopentyl phosphate + H2O. It functions in the pathway amino-acid biosynthesis; L-methionine biosynthesis via salvage pathway; L-methionine from S-methyl-5-thio-alpha-D-ribose 1-phosphate: step 2/6. Functionally, catalyzes the dehydration of methylthioribulose-1-phosphate (MTRu-1-P) into 2,3-diketo-5-methylthiopentyl-1-phosphate (DK-MTP-1-P). This Aspergillus flavus (strain ATCC 200026 / FGSC A1120 / IAM 13836 / NRRL 3357 / JCM 12722 / SRRC 167) protein is Methylthioribulose-1-phosphate dehydratase.